The primary structure comprises 103 residues: uncharacterized protein (103 aa).

Residues 69–103 (SSISYPGGGGGGGGSAKSLSSSKPGGGGGSPLIFL) form a disordered region. 2 stretches are compositionally biased toward gly residues: residues 74-83 (PGGGGGGGGS) and 92-103 (PGGGGGSPLIFL).

This is an uncharacterized protein from Saccharomyces cerevisiae (strain ATCC 204508 / S288c) (Baker's yeast).